The primary structure comprises 104 residues: L-rhamnose mutarotase (104 aa).

Substrate is bound at residue Tyr18. His22 functions as the Proton donor in the catalytic mechanism. Residues Tyr41 and 76–77 contribute to the substrate site; that span reads WW.

It belongs to the rhamnose mutarotase family. As to quaternary structure, homodimer.

The protein localises to the cytoplasm. It carries out the reaction alpha-L-rhamnose = beta-L-rhamnose. It functions in the pathway carbohydrate metabolism; L-rhamnose metabolism. Involved in the anomeric conversion of L-rhamnose. This is L-rhamnose mutarotase from Sinorhizobium fredii (strain NBRC 101917 / NGR234).